The following is a 375-amino-acid chain: Alcohol dehydrogenase 1A (375 aa).

Gly-1 carries the N-acetylglycine modification. Zn(2+) contacts are provided by Cys-46, His-67, Cys-97, Cys-100, Cys-103, Cys-111, and Cys-174. NAD(+) contacts are provided by residues 199–204, Asp-223, Lys-228, 293–295, and Arg-370; these read GLGGVG and VGL.

Belongs to the zinc-containing alcohol dehydrogenase family. Class-I subfamily. Multimeric (with different ratios of monomers). Zn(2+) serves as cofactor.

The protein resides in the cytoplasm. It catalyses the reaction a primary alcohol + NAD(+) = an aldehyde + NADH + H(+). It carries out the reaction a secondary alcohol + NAD(+) = a ketone + NADH + H(+). This is Alcohol dehydrogenase 1A from Saara hardwickii (Indian spiny-tailed lizard).